Reading from the N-terminus, the 634-residue chain is GTP-binding protein 4 (634 aa).

Alanine 2 carries the post-translational modification N-acetylalanine. Position 103 is an N6-acetyllysine; alternate (lysine 103). Lysine 103 participates in a covalent cross-link: Glycyl lysine isopeptide (Lys-Gly) (interchain with G-Cter in SUMO2); alternate. Serine 122 bears the Phosphoserine mark. The region spanning arginine 169 to leucine 340 is the OBG-type G domain. Residues glycine 175 to serine 182, aspartate 221 to isoleucine 225, and asparagine 289 to aspartate 292 each bind GTP. Lysine 332 is covalently cross-linked (Glycyl lysine isopeptide (Lys-Gly) (interchain with G-Cter in SUMO2)). 3 positions are modified to phosphoserine: serine 468, serine 470, and serine 472. Residues lysine 494–arginine 634 form a disordered region. Lysine 534 participates in a covalent cross-link: Glycyl lysine isopeptide (Lys-Gly) (interchain with G-Cter in SUMO2). Over residues arginine 544 to lysine 554 the composition is skewed to basic residues. The residue at position 558 (serine 558) is a Phosphoserine. Low complexity predominate over residues proline 560–arginine 572. The span at threonine 573–methionine 585 shows a compositional bias: basic and acidic residues. Basic residues predominate over residues valine 586 to glycine 604. Residues lysine 605 to proline 618 show a composition bias toward basic and acidic residues. Residues lysine 619–arginine 634 are compositionally biased toward basic residues.

It belongs to the TRAFAC class OBG-HflX-like GTPase superfamily. OBG GTPase family. NOG subfamily. Associates with pre-60S ribosomal particles. Interacts with MINAS-60 (product of an alternative open reading frame of RBM10). As to expression, ubiquitous.

Its subcellular location is the nucleus. It localises to the nucleolus. In terms of biological role, involved in the biogenesis of the 60S ribosomal subunit. Acts as TP53 repressor, preventing TP53 stabilization and cell cycle arrest. The chain is GTP-binding protein 4 (Gtpbp4) from Mus musculus (Mouse).